Here is a 504-residue protein sequence, read N- to C-terminus: uncharacterized protein (504 aa).

3 consecutive transmembrane segments (helical) span residues 146–166, 196–216, and 330–350; these read TSAG…INIA, SSAA…ADVL, and SMAL…VAVA. 372–492 serves as a coordination point for a nucleoside 3',5'-cyclic phosphate; the sequence is FLNIDVPLQA…EIAYGVARTR (121 aa).

It localises to the cell membrane. This is an uncharacterized protein from Mycobacterium tuberculosis (strain CDC 1551 / Oshkosh).